The sequence spans 363 residues: Phosphoserine aminotransferase (363 aa).

An L-glutamate-binding site is contributed by Arg42. Pyridoxal 5'-phosphate contacts are provided by residues 76–77 (GR), Trp102, Thr156, Asp175, and Gln198. N6-(pyridoxal phosphate)lysine is present on Lys199. 240 to 241 (NT) provides a ligand contact to pyridoxal 5'-phosphate.

Belongs to the class-V pyridoxal-phosphate-dependent aminotransferase family. SerC subfamily. As to quaternary structure, homodimer. The cofactor is pyridoxal 5'-phosphate.

It is found in the cytoplasm. It carries out the reaction O-phospho-L-serine + 2-oxoglutarate = 3-phosphooxypyruvate + L-glutamate. It catalyses the reaction 4-(phosphooxy)-L-threonine + 2-oxoglutarate = (R)-3-hydroxy-2-oxo-4-phosphooxybutanoate + L-glutamate. It functions in the pathway amino-acid biosynthesis; L-serine biosynthesis; L-serine from 3-phospho-D-glycerate: step 2/3. It participates in cofactor biosynthesis; pyridoxine 5'-phosphate biosynthesis; pyridoxine 5'-phosphate from D-erythrose 4-phosphate: step 3/5. Functionally, catalyzes the reversible conversion of 3-phosphohydroxypyruvate to phosphoserine and of 3-hydroxy-2-oxo-4-phosphonooxybutanoate to phosphohydroxythreonine. This chain is Phosphoserine aminotransferase, found in Shewanella sp. (strain MR-4).